The sequence spans 21 residues: 5-methyltetrahydropteroyltriglutamate--homocysteine methyltransferase (21 aa).

This sequence belongs to the vitamin-B12 independent methionine synthase family. It depends on Zn(2+) as a cofactor.

It is found in the cytoplasm. It catalyses the reaction 5-methyltetrahydropteroyltri-L-glutamate + L-homocysteine = tetrahydropteroyltri-L-glutamate + L-methionine. The protein operates within amino-acid biosynthesis; L-methionine biosynthesis via de novo pathway; L-methionine from L-homocysteine (MetE route): step 1/1. Catalyzes the transfer of a methyl group from 5-methyltetrahydrofolate to homocysteine resulting in methionine formation. The protein is 5-methyltetrahydropteroyltriglutamate--homocysteine methyltransferase of Populus euphratica (Euphrates poplar).